The following is a 450-amino-acid chain: Serine incorporator 2 (450 aa).

The next 11 helical transmembrane spans lie at 5 to 27, 40 to 57, 96 to 118, 131 to 150, 160 to 182, 203 to 225, 238 to 257, 264 to 286, 315 to 337, 380 to 402, and 417 to 439; these read LGACSLLSCASCLCGSAPCILCG, LLFTSFLFLGVLVSIIML, AVYRMCFATAAFFFFFMLLMICV, GFWFFKFLILVGITVGAFYI, FYFGVVGSFLFILIQLILFVDFA, AGLFFFTFLFYLLSIAAVALMFV, VFISLNLTFCVCVSIIAVLP, PNSGLLQASVITLYTMFVTWSAL, VWWDAPSIVGLVIFILCTFFISL, TYSYSFFHFCLVLASLHVMMTLT, and WTSVWVKICASWAGLFLYLWTLV.

Belongs to the TDE1 family.

Its subcellular location is the cell membrane. It catalyses the reaction a 1,2-diacyl-sn-glycero-3-phospho-L-serine(in) = a 1,2-diacyl-sn-glycero-3-phospho-L-serine(out). The enzyme catalyses a 1,2-diacyl-sn-glycero-3-phosphocholine(in) = a 1,2-diacyl-sn-glycero-3-phosphocholine(out). It carries out the reaction a 1,2-diacyl-sn-glycero-3-phosphoethanolamine(in) = a 1,2-diacyl-sn-glycero-3-phosphoethanolamine(out). Non-ATP-dependent, non-specific lipid transporter for phosphatidylserine, phosphatidylcholine, and phosphatidylethanolamine. Functions as a scramblase that flips lipids in both directions across the membrane. In contrast to SERINC3 and SERINC5, has no effect on gammaretrovirus particles infectivity. The sequence is that of Serine incorporator 2 (Serinc2) from Mus musculus (Mouse).